An 83-amino-acid chain; its full sequence is Small ribosomal subunit protein bS16 (83 aa).

The protein belongs to the bacterial ribosomal protein bS16 family.

The chain is Small ribosomal subunit protein bS16 from Stutzerimonas stutzeri (strain A1501) (Pseudomonas stutzeri).